The chain runs to 643 residues: Ecto-NOX disulfide-thiol exchanger 1 (643 aa).

One can recognise an RRM domain in the interval 142-221 (KTVFVGGLPE…GRLHVDFAQA (80 aa)). 2 coiled-coil regions span residues 307–342 (VQSA…LTGI) and 425–521 (QAYA…QLKG).

The protein belongs to the ENOX family. The cofactor is Cu cation.

It is found in the cell membrane. Its subcellular location is the secreted. It localises to the extracellular space. Not inhibited by the antitumor sulfonylurea LY181984, the vabilloid capsaicin, and retinoids. In terms of biological role, probably acts as a terminal oxidase of plasma electron transport from cytosolic NAD(P)H via hydroquinones to acceptors at the cell surface. Hydroquinone oxidase activity alternates with a protein disulfide-thiol interchange/oxidoreductase activity which may control physical membrane displacements associated with vesicle budding or cell enlargement. The activities oscillate with a period length of 24 minutes and play a role in control of the ultradian cellular biological clock. The polypeptide is Ecto-NOX disulfide-thiol exchanger 1 (Enox1) (Mus musculus (Mouse)).